Reading from the N-terminus, the 396-residue chain is NADH-quinone oxidoreductase subunit D 1 (396 aa).

This sequence belongs to the complex I 49 kDa subunit family. In terms of assembly, NDH-1 is composed of 14 different subunits. Subunits NuoB, C, D, E, F, and G constitute the peripheral sector of the complex.

The protein resides in the cell inner membrane. The enzyme catalyses a quinone + NADH + 5 H(+)(in) = a quinol + NAD(+) + 4 H(+)(out). Functionally, NDH-1 shuttles electrons from NADH, via FMN and iron-sulfur (Fe-S) centers, to quinones in the respiratory chain. The immediate electron acceptor for the enzyme in this species is believed to be ubiquinone. Couples the redox reaction to proton translocation (for every two electrons transferred, four hydrogen ions are translocated across the cytoplasmic membrane), and thus conserves the redox energy in a proton gradient. This is NADH-quinone oxidoreductase subunit D 1 from Rhizobium etli (strain ATCC 51251 / DSM 11541 / JCM 21823 / NBRC 15573 / CFN 42).